The primary structure comprises 151 residues: Large ribosomal subunit protein uL15 (151 aa).

Positions 37–57 are disordered; it reads GMRGQKSRSGRPTRPGFEGGQ.

Belongs to the universal ribosomal protein uL15 family. In terms of assembly, part of the 50S ribosomal subunit.

Its function is as follows. Binds to the 23S rRNA. In Prochlorococcus marinus (strain MIT 9313), this protein is Large ribosomal subunit protein uL15.